The following is a 95-amino-acid chain: Large ribosomal subunit protein uL23 (95 aa).

Belongs to the universal ribosomal protein uL23 family. Contacts protein L29, and trigger factor when it is bound to the ribosome. Part of the 50S ribosomal subunit.

Functionally, one of the early assembly proteins it binds 23S rRNA. One of the proteins that surrounds the polypeptide exit tunnel on the outside of the ribosome. Forms the main docking site for trigger factor binding to the ribosome. This Geobacillus stearothermophilus (Bacillus stearothermophilus) protein is Large ribosomal subunit protein uL23.